A 133-amino-acid polypeptide reads, in one-letter code: Global transcriptional regulator Spx (133 aa).

The cysteines at positions 10 and 13 are disulfide-linked.

The protein belongs to the ArsC family. Spx subfamily. In terms of assembly, interacts with the C-terminal domain of the alpha subunit of the RNAP.

It is found in the cytoplasm. Its function is as follows. Global transcriptional regulator that plays a key role in stress response and exerts either positive or negative regulation of genes. Acts by interacting with the C-terminal domain of the alpha subunit of the RNA polymerase (RNAP). This interaction can enhance binding of RNAP to the promoter region of target genes and stimulate their transcription, or block interaction of RNAP with activator. The polypeptide is Global transcriptional regulator Spx (Streptococcus pneumoniae serotype 4 (strain ATCC BAA-334 / TIGR4)).